A 118-amino-acid chain; its full sequence is Large ribosomal subunit protein bL20 (118 aa).

This sequence belongs to the bacterial ribosomal protein bL20 family.

Its function is as follows. Binds directly to 23S ribosomal RNA and is necessary for the in vitro assembly process of the 50S ribosomal subunit. It is not involved in the protein synthesizing functions of that subunit. The sequence is that of Large ribosomal subunit protein bL20 from Francisella tularensis subsp. holarctica (strain FTNF002-00 / FTA).